The primary structure comprises 121 residues: NADH-ubiquinone oxidoreductase chain 3 (121 aa).

Helical transmembrane passes span 11-31 (ILTF…LSYF), 63-83 (FYLV…LFPW), and 90-110 (LSIF…LGFI).

It belongs to the complex I subunit 3 family.

It is found in the mitochondrion membrane. It catalyses the reaction a ubiquinone + NADH + 5 H(+)(in) = a ubiquinol + NAD(+) + 4 H(+)(out). Its function is as follows. Core subunit of the mitochondrial membrane respiratory chain NADH dehydrogenase (Complex I) that is believed to belong to the minimal assembly required for catalysis. Complex I functions in the transfer of electrons from NADH to the respiratory chain. The immediate electron acceptor for the enzyme is believed to be ubiquinone. The chain is NADH-ubiquinone oxidoreductase chain 3 (NAD3) from Porphyra purpurea (Red seaweed).